A 469-amino-acid polypeptide reads, in one-letter code: Putative dipeptidase SH1171 (469 aa).

Zn(2+) is bound at residue histidine 84. Aspartate 86 is an active-site residue. Residue aspartate 115 coordinates Zn(2+). Glutamate 149 serves as the catalytic Proton acceptor. Positions 150, 173, and 440 each coordinate Zn(2+).

This sequence belongs to the peptidase M20A family. The cofactor is Zn(2+).

The sequence is that of Putative dipeptidase SH1171 from Staphylococcus haemolyticus (strain JCSC1435).